The primary structure comprises 356 residues: Tyrosine recombinase XerS (356 aa).

A Core-binding (CB) domain is found at 16–121 (LMPWYVLEYY…ALSSLYKYLT (106 aa)). The 186-residue stretch at 169-354 (EFLEYVDCEY…VNDEQKNALD (186 aa)) folds into the Tyr recombinase domain. Active-site residues include R210, K234, H306, R309, and H332. Y341 serves as the catalytic O-(3'-phospho-DNA)-tyrosine intermediate.

The protein belongs to the 'phage' integrase family. XerS subfamily.

It localises to the cytoplasm. FtsK is required for recombination. In terms of biological role, site-specific tyrosine recombinase, which acts by catalyzing the cutting and rejoining of the recombining DNA molecules. Essential to convert dimers of the bacterial chromosome into monomers to permit their segregation at cell division. This chain is Tyrosine recombinase XerS, found in Streptococcus mutans serotype c (strain ATCC 700610 / UA159).